The primary structure comprises 373 residues: Enoyl-[acyl-carrier-protein] reductase, mitochondrial (373 aa).

A mitochondrion-targeting transit peptide spans 1-53; that stretch reads MWVCGALCRTRAPAQLGQRLLPESRRRRPASASFSASAEPSRVRALVYGHHGD. At K61 the chain carries N6-acetyllysine; alternate. K61 carries the post-translational modification N6-succinyllysine; alternate. Y94 serves as the catalytic Proton donor. Residues N167, 193–196, and 216–218 contribute to the NADP(+) site; these read NSGV and RDT. Residues K252 and K267 each carry the N6-acetyllysine; alternate modification. An N6-succinyllysine; alternate mark is found at K252 and K267. NADP(+) is bound by residues 285 to 288 and 310 to 312; these read YGGM and FWL. Position 316 is an N6-succinyllysine (K316). K368 provides a ligand contact to NADP(+).

This sequence belongs to the zinc-containing alcohol dehydrogenase family. Quinone oxidoreductase subfamily. In terms of assembly, homodimer.

It localises to the mitochondrion. The catalysed reaction is a 2,3-saturated acyl-[ACP] + NADP(+) = a (2E)-enoyl-[ACP] + NADPH + H(+). The enzyme catalyses (2E)-butenoyl-[ACP] + NADPH + H(+) = butanoyl-[ACP] + NADP(+). It carries out the reaction (2E)-hexenoyl-[ACP] + NADPH + H(+) = hexanoyl-[ACP] + NADP(+). It catalyses the reaction (2E)-octenoyl-[ACP] + NADPH + H(+) = octanoyl-[ACP] + NADP(+). The catalysed reaction is (2E)-decenoyl-[ACP] + NADPH + H(+) = decanoyl-[ACP] + NADP(+). The enzyme catalyses (2E)-dodecenoyl-[ACP] + NADPH + H(+) = dodecanoyl-[ACP] + NADP(+). It carries out the reaction (2E)-tetradecenoyl-[ACP] + NADPH + H(+) = tetradecanoyl-[ACP] + NADP(+). It catalyses the reaction (2E)-hexadecenoyl-[ACP] + NADPH + H(+) = hexadecanoyl-[ACP] + NADP(+). Catalyzes the NADPH-dependent reduction of trans-2-enoyl thioesters in mitochondrial fatty acid synthesis (fatty acid synthesis type II). Fatty acid chain elongation in mitochondria uses acyl carrier protein (ACP) as an acyl group carrier, but the enzyme accepts both ACP and CoA thioesters as substrates in vitro. Displays a preference for medium-chain over short- and long-chain substrates. May provide the octanoyl chain used for lipoic acid biosynthesis, regulating protein lipoylation and mitochondrial respiratory activity particularly in Purkinje cells. Involved in iron homeostasis; affecting Fe-S cluster assembly and ceramide metabolism. Required for proper morphology and bioenergetic functions of mitochondria. Required for maintenance of neurons. This is Enoyl-[acyl-carrier-protein] reductase, mitochondrial (MECR) from Bos taurus (Bovine).